The following is a 206-amino-acid chain: Large ribosomal subunit protein uL4 (206 aa).

The tract at residues 49–79 (KVKTRSEISRTTKKMYKQKGTGNARHGAASA) is disordered.

Belongs to the universal ribosomal protein uL4 family. Part of the 50S ribosomal subunit.

Its function is as follows. One of the primary rRNA binding proteins, this protein initially binds near the 5'-end of the 23S rRNA. It is important during the early stages of 50S assembly. It makes multiple contacts with different domains of the 23S rRNA in the assembled 50S subunit and ribosome. Functionally, forms part of the polypeptide exit tunnel. In Methylobacterium sp. (strain 4-46), this protein is Large ribosomal subunit protein uL4.